A 274-amino-acid polypeptide reads, in one-letter code: Lectin-like protein (274 aa).

The signal sequence occupies residues 1–19; the sequence is MKIHKLCFLALLLAHTTSA. The segment at 28 to 268 is legume-lectin like; the sequence is TSELVFLGDA…RHDIWSWTFQ (241 aa). The interval 62 to 81 is disordered; the sequence is SHGQSLWSTPVPFKPSSNSS. Asparagine 129 carries N-linked (GlcNAc...) asparagine glycosylation. Serine 238 carries the post-translational modification Phosphoserine.

It belongs to the leguminous lectin family. In terms of tissue distribution, expressed in seedlings and leaves of adult plants.

The protein localises to the secreted. The protein resides in the extracellular space. It is found in the apoplast. Its subcellular location is the cell membrane. Its function is as follows. Plays a positive role in the effector-triggered immunity (ETI) response. Involved in salicylic acid (SA)-mediated processes occurring in ETI response, but is not involved in the autophagy process. Promotes systemic rather than local immunity. Essential for systemic acquired resistance (SAR), but not necessary for immune signaling downstream of SA. May act in parallel with SA. In Arabidopsis thaliana (Mouse-ear cress), this protein is Lectin-like protein.